The following is a 202-amino-acid chain: Imidazoleglycerol-phosphate dehydratase (202 aa).

This sequence belongs to the imidazoleglycerol-phosphate dehydratase family.

It localises to the cytoplasm. It carries out the reaction D-erythro-1-(imidazol-4-yl)glycerol 3-phosphate = 3-(imidazol-4-yl)-2-oxopropyl phosphate + H2O. It participates in amino-acid biosynthesis; L-histidine biosynthesis; L-histidine from 5-phospho-alpha-D-ribose 1-diphosphate: step 6/9. The sequence is that of Imidazoleglycerol-phosphate dehydratase from Rhizobium leguminosarum bv. trifolii (strain WSM2304).